A 552-amino-acid chain; its full sequence is MDNMSITNTPTSNDACLSIVHSLMCHRQGGESETFAKRAIESLVKKLKEKKDELDSLITAITTNGAHPSKCVTIQRTLDGRLQVAGRKGFPHVIYARLWRWPDLHKNELKHVKYCQYAFDLKCDSVCVNPYHYERVVSPGIDLSGLTLQSNAPSGMLVKDEYVHDFEGQPSLATEGHSIQTIQHPPSNRASTETYSTPALLAPSESNATSTTNFPNIPVASTSQPASILAGSHSEGLLQIASGPQPGQQQNGFTGQPATYHHNSTTTWTGSRTAPYPPNLPHHQNGHLQHHPPMPPHPGHYWPVHNELAFQPPISNHPAPEYWCSIAYFEMDVQVGETFKVPSSCPIVTVDGYVDPSGGDRFCLGQLSNVHRTEAIERARLHIGKGVQLECKGEGDVWVRCLSDHAVFVQSYYLDREAGRAPGDAVHKIYPSAYIKVFDLRQCHRQMQQQAATAQAAAAAQAAAVAGNIPGPGSVGGIAPAISLSAAAGIGVDDLRRLCILRMSFVKGWGPDYPRQSIKETPCWIEIHLHRALQLLDEVLHTMPIADPQPLD.

The segment at 1-322 (MDNMSITNTP…PISNHPAPEY (322 aa)) is mediates interaction with ZBTB7A. The MH1 domain maps to 18 to 142 (SIVHSLMCHR…YERVVSPGID (125 aa)). N6-acetyllysine is present on Lys-37. The required for interaction with TSC22D1 stretch occupies residues 44–69 (VKKLKEKKDELDSLITAITTNGAHPS). Cys-71 contributes to the Zn(2+) binding site. Lys-113 is covalently cross-linked (Glycyl lysine isopeptide (Lys-Gly) (interchain with G-Cter in SUMO2)). Residues Cys-115, Cys-127, and His-132 each contribute to the Zn(2+) site. A disordered region spans residues 264 to 297 (STTTWTGSRTAPYPPNLPHHQNGHLQHHPPMPPH). The tract at residues 275 to 320 (PYPPNLPHHQNGHLQHHPPMPPHPGHYWPVHNELAFQPPISNHPAP) is SAD. In terms of domain architecture, MH2 spans 323–552 (WCSIAYFEMD…MPIADPQPLD (230 aa)). An N6-acetyllysine mark is found at Lys-428 and Lys-507. Residue Lys-519 forms a Glycyl lysine isopeptide (Lys-Gly) (interchain with G-Cter in ubiquitin) linkage.

Belongs to the dwarfin/SMAD family. Monomer; in the absence of TGF-beta activation. Heterotrimer; on TGF-beta activation. Heterotrimer composed of two molecules of a C-terminally phosphorylated R-SMAD molecule, SMAD2 or SMAD3, and one molecule of SMAD4 to form the transcriptional active SMAD2/SMAD3-SMAD4 complex. Found in a ternary complex composed of SMAD4, STK11/LKB1 and STK11IP. Found in a complex with SMAD1 and YY1. Identified in a complex that contains at least ZNF451, SMAD2, SMAD3 and SMAD4. Interacts with ATF2, COPS5, DACH1, MSG1, SKI, STK11/LKB1, STK11IP and TRIM33. Associates with ZNF423 or ZNF521 in response to BMP2 leading to activate transcription of BMP target genes. Interacts with USP9X. Interacts with RBPMS. Interacts with WWTR1 (via coiled-coil domain). Interacts with CITED1 and CITED2. Interacts with PDPK1 (via PH domain). Interacts with VPS39; this interaction affects heterodimer formation with SMAD3, but not with SMAD2, and leads to inhibition of SMAD3-dependent transcription activation. Interactions with VPS39 and SMAD2 may be mutually exclusive. Interacts (via MH2 domain) with ZNF451 (via N-terminal zinc-finger domains). Interacts with ZC3H3. Interacts weakly with ZNF8. Interacts with NUP93 and IPO7; translocates SMAD4 to the nucleus through the NPC upon BMP7 stimulation resulting in activation of SMAD4 signaling. Interacts with CREB3L1, the interaction takes place upon TGFB1 induction and SMAD4 acts as a CREB3L1 coactivator to induce the expression of genes involved in the assembly of collagen extracellular matrix. Interacts with DLX1. Interacts with ZBTB7A; the interaction is direct and stimulated by TGFB1. Interacts with CREBBP; the recruitment of this transcriptional coactivator is negatively regulated by ZBTB7A. Interacts with EP300; the interaction with this transcriptional coactivator is negatively regulated by ZBTB7A. Interacts with HDAC1. Interacts (via MH2 domain) with ZMIZ1 (via SP-RING-type domain); in the TGF-beta signaling pathway increases the activity of the SMAD3/SMAD4 transcriptional complex. Interacts (via N-terminus) with TSC22D1. In terms of processing, phosphorylated by PDPK1. Post-translationally, monoubiquitinated on Lys-519 by E3 ubiquitin-protein ligase TRIM33. Monoubiquitination hampers its ability to form a stable complex with activated SMAD2/3 resulting in inhibition of TGF-beta/BMP signaling cascade. Deubiquitination by USP9X restores its competence to mediate TGF-beta signaling.

It localises to the cytoplasm. It is found in the nucleus. Its function is as follows. Common SMAD (co-SMAD) is the coactivator and mediator of signal transduction by TGF-beta (transforming growth factor). Component of the heterotrimeric SMAD2/SMAD3-SMAD4 complex that forms in the nucleus and is required for the TGF-mediated signaling. Promotes binding of the SMAD2/SMAD4/FAST-1 complex to DNA and provides an activation function required for SMAD1 or SMAD2 to stimulate transcription. Component of the multimeric SMAD3/SMAD4/JUN/FOS complex which forms at the AP1 promoter site; required for synergistic transcriptional activity in response to TGF-beta. Acts synergistically with SMAD1 and YY1 in bone morphogenetic protein (BMP)-mediated cardiac-specific gene expression. Binds to SMAD binding elements (SBEs) (5'-GTCT/AGAC-3') within BMP response element (BMPRE) of cardiac activating regions. May act as a tumor suppressor. Positively regulates PDPK1 kinase activity by stimulating its dissociation from the 14-3-3 protein YWHAQ which acts as a negative regulator. In muscle physiology, plays a central role in the balance between atrophy and hypertrophy. When recruited by MSTN, promotes atrophy response via phosphorylated SMAD2/4. MSTN decrease causes SMAD4 release and subsequent recruitment by the BMP pathway to promote hypertrophy via phosphorylated SMAD1/5/8. The sequence is that of Mothers against decapentaplegic homolog 4 (SMAD4) from Sus scrofa (Pig).